A 207-amino-acid chain; its full sequence is Pyrrolidone-carboxylate peptidase (207 aa).

Catalysis depends on residues glutamate 80, cysteine 143, and histidine 167.

This sequence belongs to the peptidase C15 family. In terms of assembly, homotetramer.

It is found in the cytoplasm. The enzyme catalyses Release of an N-terminal pyroglutamyl group from a polypeptide, the second amino acid generally not being Pro.. Functionally, removes 5-oxoproline from various penultimate amino acid residues except L-proline. This Coprothermobacter proteolyticus (strain ATCC 35245 / DSM 5265 / OCM 4 / BT) protein is Pyrrolidone-carboxylate peptidase.